A 358-amino-acid chain; its full sequence is Heme A synthase (358 aa).

Transmembrane regions (helical) follow at residues 22–42, 107–127, 133–153, 172–192, 208–228, 269–289, 302–322, and 324–344; these read IQVW…VGGA, VLGR…WVTK, IFLQ…IGWW, LAIH…LSRG, FAGW…LVAG, FVHR…ALYV, AIFL…TLLH, and VPIS…CFSV. Heme is bound at residue His271. His332 contributes to the heme binding site.

This sequence belongs to the COX15/CtaA family. Type 2 subfamily. In terms of assembly, interacts with CtaB. Heme b serves as cofactor.

It localises to the cell membrane. The catalysed reaction is Fe(II)-heme o + 2 A + H2O = Fe(II)-heme a + 2 AH2. It functions in the pathway porphyrin-containing compound metabolism; heme A biosynthesis; heme A from heme O: step 1/1. In terms of biological role, catalyzes the conversion of heme O to heme A by two successive hydroxylations of the methyl group at C8. The first hydroxylation forms heme I, the second hydroxylation results in an unstable dihydroxymethyl group, which spontaneously dehydrates, resulting in the formyl group of heme A. This Bartonella bacilliformis (strain ATCC 35685 / KC583 / Herrer 020/F12,63) protein is Heme A synthase.